We begin with the raw amino-acid sequence, 345 residues long: Splicing factor YJU2 (345 aa).

Residues Cys-43, Cys-46, Cys-80, and Cys-83 each contribute to the Zn(2+) site. The disordered stretch occupies residues 205–345 (KRLRDSDSEE…YSDSDDSSSD (141 aa)). Residues 217–232 (ENAKERSKKHIADKPT) show a composition bias toward basic and acidic residues. 2 stretches are compositionally biased toward low complexity: residues 308-317 (SSITSSSASS) and 327-337 (GSSLGLLGAYS).

Belongs to the CWC16 family. YJU2 subfamily. As to quaternary structure, component of the spliceosome. Present in the activated B complex, the catalytically activated B* complex which catalyzes the branching, the catalytic step 1 C complex catalyzing the exon ligation, and the postcatalytic P complex containing the ligated exons (mRNA) and the excised lariat intron.

The protein localises to the nucleus. Functionally, part of the spliceosome which catalyzes two sequential transesterification reactions, first the excision of the non-coding intron from pre-mRNA and then the ligation of the coding exons to form the mature mRNA. Plays a role in stabilizing the structure of the spliceosome catalytic core and docking of the branch helix into the active site, producing 5'-exon and lariat intron-3'-intermediates. May protect cells from TP53-dependent apoptosis upon dsDNA break damage through association with PRP19-CD5L complex. The sequence is that of Splicing factor YJU2 from Danio rerio (Zebrafish).